We begin with the raw amino-acid sequence, 618 residues long: Protein polyglycylase TTLL10 (618 aa).

The disordered stretch occupies residues 1 to 76; sequence MGSSQEEGLP…GLLLGDGKPS (76 aa). Residues 57–74 show a composition bias toward low complexity; that stretch reads ATGPPAALLEGLLLGDGK. Residues 82–479 enclose the TTL domain; sequence PGPFFYIGGN…TFQKSLRGQK (398 aa). Residues Lys240, 246-247, 289-292, 302-304, and 345-346 contribute to the ATP site; these read QG, QRYI, KFD, and TN. Gln246 is an a protein binding site. Residues Asp425, Glu438, and Asn440 each contribute to the Mg(2+) site. Residues 503–618 form a disordered region; that stretch reads LGGSCSLRRR…PATLPAFRDL (116 aa). The segment covering 539–557 has biased composition (pro residues); it reads PVPPPLAPQRPQLPGPSPD. Over residues 585–594 the composition is skewed to basic and acidic residues; sequence AKEEREEPEN.

It depends on Mg(2+) as a cofactor.

The protein resides in the cytoplasm. Its subcellular location is the cytoskeleton. It is found in the cell projection. It localises to the cilium. The protein localises to the cilium axoneme. The enzyme catalyses (glycyl)(n)-glycyl-L-glutamyl-[protein] + glycine + ATP = (glycyl)(n+1)-glycyl-L-glutamyl-[protein] + ADP + phosphate + H(+). In terms of biological role, polyglycylase which modifies both tubulin and non-tubulin proteins, generating polyglycine side chains of variable lengths on the gamma-carboxyl groups of specific glutamate residues of target proteins. Involved in the elongation step rather than the initiation step of the polyglycylation reaction. Polyglycylates alpha-tubulin and beta-tubulin. Polyglycylates non-tubulin proteins such as nucleosome assembly protein NAP1. This chain is Protein polyglycylase TTLL10 (TTLL10), found in Macaca fascicularis (Crab-eating macaque).